We begin with the raw amino-acid sequence, 208 residues long: uncharacterized protein (208 aa).

Disordered stretches follow at residues 91–115 (PGQA…PSQD), 127–156 (QSWS…KRPG), and 182–208 (NKLG…RKFK). Positions 127 to 136 (QSWSSGTSRP) are enriched in polar residues.

This is an uncharacterized protein from Rattus norvegicus (Rat).